Here is a 263-residue protein sequence, read N- to C-terminus: Proteasome subunit beta type-4 (263 aa).

N-acetylmethionine is present on M1. The propeptide occupies 1–44 (MEAFWESRTGHWAGGPAPGQFYRVPSTPSCLMDPMSAPARPITR). S26 is subject to Phosphoserine. Phosphotyrosine is present on Y101.

The protein belongs to the peptidase T1B family. The 26S proteasome consists of a 20S proteasome core and two 19S regulatory subunits. The 20S proteasome core is a barrel-shaped complex made of 28 subunits that are arranged in four stacked rings. The two outer rings are each formed by seven alpha subunits, and the two inner rings are formed by seven beta subunits. The proteolytic activity is exerted by three beta-subunits PSMB5, PSMB6 and PSMB7. Forms a ternary complex with SMAD1 and OAZ1 before PSMB4 is incorporated into the 20S proteasome. Interacts with PRPF19.

The protein localises to the cytoplasm. It localises to the nucleus. Its function is as follows. Non-catalytic component of the 20S core proteasome complex involved in the proteolytic degradation of most intracellular proteins. This complex plays numerous essential roles within the cell by associating with different regulatory particles. Associated with two 19S regulatory particles, forms the 26S proteasome and thus participates in the ATP-dependent degradation of ubiquitinated proteins. The 26S proteasome plays a key role in the maintenance of protein homeostasis by removing misfolded or damaged proteins that could impair cellular functions, and by removing proteins whose functions are no longer required. Associated with the PA200 or PA28, the 20S proteasome mediates ubiquitin-independent protein degradation. This type of proteolysis is required in several pathways including spermatogenesis (20S-PA200 complex) or generation of a subset of MHC class I-presented antigenic peptides (20S-PA28 complex). SMAD1/OAZ1/PSMB4 complex mediates the degradation of the CREBBP/EP300 repressor SNIP1. The protein is Proteasome subunit beta type-4 (Psmb4) of Rattus norvegicus (Rat).